A 293-amino-acid chain; its full sequence is Acetyl-coenzyme A carboxylase carboxyl transferase subunit beta (293 aa).

The CoA carboxyltransferase N-terminal domain occupies 29-293 (LWSKCPECGL…GSKSLELTNA (265 aa)). 4 residues coordinate Zn(2+): Cys-33, Cys-36, Cys-52, and Cys-55. The C4-type zinc finger occupies 33–55 (CPECGLVVYLKDLRLNASVCAGC).

It belongs to the AccD/PCCB family. In terms of assembly, acetyl-CoA carboxylase is a heterohexamer composed of biotin carboxyl carrier protein (AccB), biotin carboxylase (AccC) and two subunits each of ACCase subunit alpha (AccA) and ACCase subunit beta (AccD). It depends on Zn(2+) as a cofactor.

The protein localises to the cytoplasm. The catalysed reaction is N(6)-carboxybiotinyl-L-lysyl-[protein] + acetyl-CoA = N(6)-biotinyl-L-lysyl-[protein] + malonyl-CoA. Its pathway is lipid metabolism; malonyl-CoA biosynthesis; malonyl-CoA from acetyl-CoA: step 1/1. Its function is as follows. Component of the acetyl coenzyme A carboxylase (ACC) complex. Biotin carboxylase (BC) catalyzes the carboxylation of biotin on its carrier protein (BCCP) and then the CO(2) group is transferred by the transcarboxylase to acetyl-CoA to form malonyl-CoA. The polypeptide is Acetyl-coenzyme A carboxylase carboxyl transferase subunit beta (Synechococcus sp. (strain CC9902)).